The sequence spans 480 residues: MTVETFNPKQTTTLETPAKTLEAASADLANAESATGNRIGFVSLGCPKNLVDSERILTQLRIDGYEVTNSYDNADLVIVNTCGFIDAAVEESLDAVREALEENGKVIVTGCLGAKENQIREVHPDVLEITGPHSYEAVLKHVHKYVPKPEHNPFTSLIPQTGVKLTPKHYAYLKISEGCDNRCTFCIIPALRGDLDSRPAGSVLDEAKRLVESGVQEILVVSQDTSAYGKDKGGRTDFWNGMPVKQDITSLARQLGKMGAWVRLHYIYPYPWVDDLIPLMAEGLILPYLDIPMQHASPRILKMMKRPGRVDRQLEAIQRWREICPDLVIRSTFIVGFPGETEEDFEMLLDFLREARLDRVGCFKYSEVEGAVANTIAELISEDVKEDRYHRFMEVQAEISAERLARFVGRTMDILIDDVDEEGAIGRSFADAPEIDGMVFINGETELEPGMLVRAVITHSDEHDLWAELVDADAEDDIEA.

In terms of domain architecture, MTTase N-terminal spans 37–147; sequence NRIGFVSLGC…VLKHVHKYVP (111 aa). [4Fe-4S] cluster contacts are provided by cysteine 46, cysteine 82, cysteine 111, cysteine 179, cysteine 183, and cysteine 186. Residues 165–402 enclose the Radical SAM core domain; that stretch reads LTPKHYAYLK…MEVQAEISAE (238 aa). In terms of domain architecture, TRAM spans 405–471; it reads ARFVGRTMDI…EHDLWAELVD (67 aa).

This sequence belongs to the methylthiotransferase family. RimO subfamily. It depends on [4Fe-4S] cluster as a cofactor.

Its subcellular location is the cytoplasm. The catalysed reaction is L-aspartate(89)-[ribosomal protein uS12]-hydrogen + (sulfur carrier)-SH + AH2 + 2 S-adenosyl-L-methionine = 3-methylsulfanyl-L-aspartate(89)-[ribosomal protein uS12]-hydrogen + (sulfur carrier)-H + 5'-deoxyadenosine + L-methionine + A + S-adenosyl-L-homocysteine + 2 H(+). In terms of biological role, catalyzes the methylthiolation of an aspartic acid residue of ribosomal protein uS12. The polypeptide is Ribosomal protein uS12 methylthiotransferase RimO (Shewanella sp. (strain ANA-3)).